Consider the following 420-residue polypeptide: Diaminobutyrate--2-oxoglutarate transaminase (420 aa).

Lys271 is subject to N6-(pyridoxal phosphate)lysine.

It belongs to the class-III pyridoxal-phosphate-dependent aminotransferase family. Pyridoxal 5'-phosphate serves as cofactor.

The catalysed reaction is L-2,4-diaminobutanoate + 2-oxoglutarate = L-aspartate 4-semialdehyde + L-glutamate. Its pathway is amine and polyamine biosynthesis; ectoine biosynthesis; L-ectoine from L-aspartate 4-semialdehyde: step 1/3. Functionally, catalyzes reversively the conversion of L-aspartate beta-semialdehyde (ASA) to L-2,4-diaminobutyrate (DABA) by transamination with L-glutamate. In Streptomyces anulatus (Streptomyces chrysomallus), this protein is Diaminobutyrate--2-oxoglutarate transaminase (ectB).